The following is a 183-amino-acid chain: Inner membrane protein p54 (183 aa).

A helical transmembrane segment spans residues 32–52 (YTILIAIVVLVIIIIVLIYLF). Residues 81 to 157 (EVTPQPGTSK…PYTTVTTQNT (77 aa)) form a disordered region. Polar residues predominate over residues 111–122 (RPATNKPVTDNP). Positions 130 to 143 (ATGGPAAAPAAASA) are enriched in low complexity. An interaction with host DYNLL1 region spans residues 149 to 161 (YTTVTTQNTASQT).

This sequence belongs to the asfivirus envelope protein p54 family. Interacts with the host light chain cytoplasmic dynein DYNLL1; this interaction is critical for intracellular microtubule-dependent virus transport toward viral factories.

It localises to the virion membrane. The protein resides in the host cytoplasm. The protein localises to the host cytoskeleton. It is found in the host endoplasmic reticulum membrane. In terms of biological role, inner envelope protein involved, through its interaction with host dynein, in the intracellular microtubule-dependent transport of viral capsid toward viral factories. Seems to induce caspase-3 activation and apoptosis. Plays a role in virion morphogenesis by recruiting and transforming the host ER membranes into the precursors of the viral envelope. Involved in virus attachment to the host cell. The chain is Inner membrane protein p54 from Ornithodoros (relapsing fever ticks).